Consider the following 325-residue polypeptide: UDP-N-acetylglucosamine transporter (325 aa).

The next 8 helical transmembrane spans lie at 8–24 (VSLG…VLTM), 42–58 (AVVV…ILLV), 138–154 (VYQW…VAFV), 173–189 (FVGL…SGFA), 209–225 (IQLG…GVYI), 246–262 (IVVV…AAVI), 268–284 (ILKG…STLI), and 295–311 (TSVF…ATFL).

Belongs to the nucleotide-sugar transporter family. SLC35A subfamily. As to quaternary structure, interacts with SLC35A2; the interaction is reduced in the presence of SLC35A4. Found in a complex with SLC35A2 and SLC35A4. Interacts with MGAT4B. Post-translationally, O-Glcnacylation regulates the stability of SLC35A3 and the specific complex formation with MGAT4B.

It localises to the golgi apparatus membrane. The catalysed reaction is UMP(out) + UDP-N-acetyl-alpha-D-glucosamine(in) = UMP(in) + UDP-N-acetyl-alpha-D-glucosamine(out). Functionally, transports diphosphate-N-acetylglucosamine (UDP-GlcNAc) from the cytosol into the lumen of the Golgi apparatus, functioning as an antiporter that exchanges UDP-N-acetyl-alpha-D-glucosamine for UMP. May supply UDP-GlcNAc as substrate for Golgi-resident glycosyltransferases that generate highly branched, multiantennary complex N-glycans and keratan sulfate. However, the exact role of SLC35A3 still needs to be elucidated, it could be a member of a catalytically more efficient multiprotein complex rather than function independently as a single transporter. This Homo sapiens (Human) protein is UDP-N-acetylglucosamine transporter (SLC35A3).